Reading from the N-terminus, the 253-residue chain is Allene oxide cyclase 2, chloroplastic (253 aa).

The transit peptide at 1-77 (MASSAVSLQS…SQNGNIENPR (77 aa)) directs the protein to the chloroplast.

The protein belongs to the allene oxide cyclase family. As to expression, highly expressed in fully developed leaves.

The protein resides in the plastid. It is found in the chloroplast. It catalyses the reaction (9Z,13S,15Z)-12,13-epoxyoctadeca-9,11,15-trienoate = (9S,13S,15Z)-12-oxophyto-10,15-dienoate. Involved in the production of 12-oxo-phytodienoic acid (OPDA), a precursor of jasmonic acid. This is Allene oxide cyclase 2, chloroplastic (AOC2) from Arabidopsis thaliana (Mouse-ear cress).